We begin with the raw amino-acid sequence, 335 residues long: Mitochondrial thiamine diphosphate carrier 1 (335 aa).

Transmembrane regions (helical) follow at residues 13–29 (KRAVIDASAGGVAGAIS), 88–105 (VPALLMVVPYTSIQFAVL), 127–150 (YLSYISGALAGCAATVGSYPFDLL), 182–199 (LYAGLSPTLIEIIPYAGL), 231–247 (SLSSFQLFLCGLASGTV), and 304–323 (GIVPSTIKAAPAGAVTFVAY). 3 Solcar repeats span residues 13–111 (KRAV…VKSF), 124–210 (LSPY…FKRW), and 232–329 (LSSF…ASDW).

It belongs to the mitochondrial carrier (TC 2.A.29) family.

Its subcellular location is the mitochondrion inner membrane. Mitochondrial transporter that mediates uptake of thiamine diphosphate (ThDP) into mitochondria. This Arabidopsis thaliana (Mouse-ear cress) protein is Mitochondrial thiamine diphosphate carrier 1.